Here is a 165-residue protein sequence, read N- to C-terminus: Ribosomal RNA large subunit methyltransferase H (165 aa).

Glycine 109 is a binding site for S-adenosyl-L-methionine.

Belongs to the RNA methyltransferase RlmH family. In terms of assembly, homodimer.

Its subcellular location is the cytoplasm. It catalyses the reaction pseudouridine(1915) in 23S rRNA + S-adenosyl-L-methionine = N(3)-methylpseudouridine(1915) in 23S rRNA + S-adenosyl-L-homocysteine + H(+). In terms of biological role, specifically methylates the pseudouridine at position 1915 (m3Psi1915) in 23S rRNA. This Methylorubrum populi (strain ATCC BAA-705 / NCIMB 13946 / BJ001) (Methylobacterium populi) protein is Ribosomal RNA large subunit methyltransferase H.